We begin with the raw amino-acid sequence, 206 residues long: Dephospho-CoA kinase (206 aa).

A DPCK domain is found at 4–200 (IVALTGGIGS…AYYLQLASQF (197 aa)). An ATP-binding site is contributed by 12-17 (GSGKST).

Belongs to the CoaE family.

The protein resides in the cytoplasm. It carries out the reaction 3'-dephospho-CoA + ATP = ADP + CoA + H(+). The protein operates within cofactor biosynthesis; coenzyme A biosynthesis; CoA from (R)-pantothenate: step 5/5. Functionally, catalyzes the phosphorylation of the 3'-hydroxyl group of dephosphocoenzyme A to form coenzyme A. The chain is Dephospho-CoA kinase from Escherichia coli O6:H1 (strain CFT073 / ATCC 700928 / UPEC).